Here is an 85-residue protein sequence, read N- to C-terminus: Large ribosomal subunit protein uL23 (85 aa).

This sequence belongs to the universal ribosomal protein uL23 family. In terms of assembly, part of the 50S ribosomal subunit. Interacts with protein L29 and weakly with protein L39e.

Its function is as follows. Binds to a specific region on the 23S rRNA. Located at the polypeptide exit tunnel on the outside of the subunit. The sequence is that of Large ribosomal subunit protein uL23 from Haloarcula marismortui (strain ATCC 43049 / DSM 3752 / JCM 8966 / VKM B-1809) (Halobacterium marismortui).